The primary structure comprises 89 residues: MSLSVEAKAKIVSDFGSDAKDSGSTEVQVALLTAQISHLQGHFAEHKKDHHSRRGLLRMVSQRRKLLDYLKGKDVARYTSLIERLGLRR.

This sequence belongs to the universal ribosomal protein uS15 family. As to quaternary structure, part of the 30S ribosomal subunit. Forms a bridge to the 50S subunit in the 70S ribosome, contacting the 23S rRNA.

Its function is as follows. One of the primary rRNA binding proteins, it binds directly to 16S rRNA where it helps nucleate assembly of the platform of the 30S subunit by binding and bridging several RNA helices of the 16S rRNA. Functionally, forms an intersubunit bridge (bridge B4) with the 23S rRNA of the 50S subunit in the ribosome. The sequence is that of Small ribosomal subunit protein uS15 from Sodalis glossinidius (strain morsitans).